We begin with the raw amino-acid sequence, 245 residues long: MLIPALDLIDGKVVRLYQGDFAQKTEFDLTPLGQAQLYAQAGAEWLHLVDLDGAKDPDKRQQKLLAKLASDSGMKCQAGGGIRTTEDLEALFDAGIERAVIGSTAVNQPDTVKQWFQAYGGEKIVLALDVNIDQSGNAMVATHGWQQASTHTLDDILNRYLDLGCRHVLCTDISKDGTMTGTNVELYKRYKQLYPQVVWQASGGVSCLDDLKDLKAVNCDSVILGKSLLTGAFTMQEALACWQNA.

The Proton acceptor role is filled by Asp7. The Proton donor role is filled by Asp129.

This sequence belongs to the HisA/HisF family.

The protein localises to the cytoplasm. The catalysed reaction is 1-(5-phospho-beta-D-ribosyl)-5-[(5-phospho-beta-D-ribosylamino)methylideneamino]imidazole-4-carboxamide = 5-[(5-phospho-1-deoxy-D-ribulos-1-ylimino)methylamino]-1-(5-phospho-beta-D-ribosyl)imidazole-4-carboxamide. It functions in the pathway amino-acid biosynthesis; L-histidine biosynthesis; L-histidine from 5-phospho-alpha-D-ribose 1-diphosphate: step 4/9. The polypeptide is 1-(5-phosphoribosyl)-5-[(5-phosphoribosylamino)methylideneamino] imidazole-4-carboxamide isomerase (Idiomarina loihiensis (strain ATCC BAA-735 / DSM 15497 / L2-TR)).